A 146-amino-acid polypeptide reads, in one-letter code: Snake venom vascular endothelial growth factor toxin TfsvVEGF (146 aa).

The signal sequence occupies residues 1 to 24 (MAAYLLAVAILFCIQGWPSGTVQG). Position 25 is a pyrrolidone carboxylic acid (Q25). Intrachain disulfides connect C38-C80, C69-C115, and C73-C117. Basic and acidic residues predominate over residues 118-139 (RPRSPGDVNNGKDKRNPEEGGP). The tract at residues 118–146 (RPRSPGDVNNGKDKRNPEEGGPRARFPFV) is disordered.

The protein belongs to the PDGF/VEGF growth factor family. Snake venom VEGF subfamily. Homodimer; disulfide-linked. Interacts with VEGF receptor-1 (FLT1) with a high affinity, whereas it binds to VEGF receptor-2 (KDR) with a low affinity. Does not bind VEGF receptor-3 (FLT4). Expressed by the venom gland.

The protein localises to the secreted. In terms of biological role, snake venom VEGFs may contribute to venom dispersion and prey subjugation by inducing vascular permeability and hypotension. This protein strongly increases vascular permeability, and weakly stimulates angiogenesis. Interacts with VEGF receptor-1 (FLT1) with a high affinity, whereas it binds to VEGF receptor-2 (KDR) with a low affinity. Stimulates autophosphorylation of VEGF receptor-1 (VEGFR-1/FLT1), and VEGF receptor-2 (VEGFR-2/KDR). This Protobothrops flavoviridis (Habu) protein is Snake venom vascular endothelial growth factor toxin TfsvVEGF.